Here is a 20-residue protein sequence, read N- to C-terminus: U1-poneritoxin-Ni1a (20 aa).

Position 20 is a lysine amide (Lys-20).

Belongs to the non-disulfide-bridged peptide (NDBP) superfamily. Medium-length antimicrobial peptide (group 3) family. Ponericin-W subfamily. In terms of tissue distribution, expressed by the venom gland.

It localises to the secreted. The protein resides in the target cell membrane. Its function is as follows. Has activity against Gram-positive bacteria. Has insecticidal and hemolytic activities. May act by disrupting the integrity of the bacterial cell membrane. The protein is U1-poneritoxin-Ni1a of Neoponera inversa (Ant).